A 379-amino-acid chain; its full sequence is Carbamoyl phosphate synthase small chain (379 aa).

Positions 1–189 (MSKLALLVLE…GLPEAKDDSE (189 aa)) are CPSase. L-glutamine contacts are provided by S47, G241, and G243. Residues 193 to 379 (HVVAYDFGAK…FIELIKKHSA (187 aa)) form the Glutamine amidotransferase type-1 domain. The active-site Nucleophile is C269. L-glutamine-binding residues include L270, Q273, N311, G313, and F314. Residues H353 and E355 contribute to the active site.

It belongs to the CarA family. In terms of assembly, composed of two chains; the small (or glutamine) chain promotes the hydrolysis of glutamine to ammonia, which is used by the large (or ammonia) chain to synthesize carbamoyl phosphate. Tetramer of heterodimers (alpha,beta)4.

It carries out the reaction hydrogencarbonate + L-glutamine + 2 ATP + H2O = carbamoyl phosphate + L-glutamate + 2 ADP + phosphate + 2 H(+). It catalyses the reaction L-glutamine + H2O = L-glutamate + NH4(+). It functions in the pathway amino-acid biosynthesis; L-arginine biosynthesis; carbamoyl phosphate from bicarbonate: step 1/1. It participates in pyrimidine metabolism; UMP biosynthesis via de novo pathway; (S)-dihydroorotate from bicarbonate: step 1/3. Functionally, small subunit of the glutamine-dependent carbamoyl phosphate synthetase (CPSase). CPSase catalyzes the formation of carbamoyl phosphate from the ammonia moiety of glutamine, carbonate, and phosphate donated by ATP, constituting the first step of 2 biosynthetic pathways, one leading to arginine and/or urea and the other to pyrimidine nucleotides. The small subunit (glutamine amidotransferase) binds and cleaves glutamine to supply the large subunit with the substrate ammonia. The chain is Carbamoyl phosphate synthase small chain from Vibrio parahaemolyticus serotype O3:K6 (strain RIMD 2210633).